Reading from the N-terminus, the 381-residue chain is MTLRYLTAGESHGPALVAIAEGFPAGLPVDFEAVDRDLRRRQKGYGRGGRMKIETDAAQFLAGLRGGVTTGAPIALAVWNKDHENWKDLVSPYARGGRKFTQVRPGHADLAGALKYGLDDARDVLERASARSTAVIVALGALAKALLSSQGVEVCSRVVAIGPRDIRPDAPPTPAQRDAIEASDLHVDDEALAAEWRALIDAEKARGGSIGGAFDVYATGLPIGLGSHVHPDRRLDARLAGALCGVQAIRAVEIGDGTQVGRPGYEFHDAIHHDPARGFWRETNRAGGLEGGMTDGMPLRVRAYMKPIPTMLHPLATVDLATRAATQARYERSDVCAVPAAAVVGEAVVAWELANALLEKFGGDTVEDVRRAVEAYAARIR.

NADP(+)-binding residues include arginine 41 and arginine 47. Residues 127–129 (RAS), 247–248 (QA), glycine 291, 306–310 (KPIPT), and arginine 332 contribute to the FMN site.

Belongs to the chorismate synthase family. Homotetramer. It depends on FMNH2 as a cofactor.

The catalysed reaction is 5-O-(1-carboxyvinyl)-3-phosphoshikimate = chorismate + phosphate. The protein operates within metabolic intermediate biosynthesis; chorismate biosynthesis; chorismate from D-erythrose 4-phosphate and phosphoenolpyruvate: step 7/7. Functionally, catalyzes the anti-1,4-elimination of the C-3 phosphate and the C-6 proR hydrogen from 5-enolpyruvylshikimate-3-phosphate (EPSP) to yield chorismate, which is the branch point compound that serves as the starting substrate for the three terminal pathways of aromatic amino acid biosynthesis. This reaction introduces a second double bond into the aromatic ring system. This Anaeromyxobacter dehalogenans (strain 2CP-C) protein is Chorismate synthase.